An 837-amino-acid chain; its full sequence is A disintegrin and metalloproteinase with thrombospondin motifs 4 (837 aa).

The signal sequence occupies residues 1 to 51 (MSQTGSHPGRGLAGRWLWGAQPCLLLPIVPLSWLVWLLLLLLASLLPSARL). Positions 52–212 (ASPLPREEEI…PSPRPRRAKR (161 aa)) are excised as a propeptide. Asn68 carries N-linked (GlcNAc...) asparagine glycosylation. The tract at residues 166–191 (EGGTPNSAGGPGAHILRRKSPASGQG) is disordered. The Cysteine switch signature appears at 192-199 (PMCNVKAP). Cys194 is a Zn(2+) binding site. The region spanning 218–428 (RFVETLVVAD…GYGHCLLDKP (211 aa)) is the Peptidase M12B domain. Disulfide bonds link Cys293/Cys345, Cys322/Cys327, Cys339/Cys423, Cys377/Cys407, Cys449/Cys472, Cys460/Cys482, Cys467/Cys501, Cys495/Cys506, Cys532/Cys569, Cys536/Cys574, and Cys547/Cys559. His361 lines the Zn(2+) pocket. Glu362 is a catalytic residue. The Zn(2+) site is built by His365 and His371. Residues 437-519 (TFPGKDYDAD…DQLQDFNIPQ (83 aa)) form the Disintegrin domain. One can recognise a TSP type-1 domain in the interval 520 to 575 (AGGWGPWGPWGDCSRTCGGGVQFSSRDCTRPVPRNGGKYCEGRRTRFRSCNTEDCP). The interval 686–837 (SKQSGSFRKF…LRRRPWVGRK (152 aa)) is spacer.

Interacts with SRPX2. Zn(2+) is required as a cofactor. The precursor is cleaved by a furin endopeptidase. In terms of processing, glycosylated. Can be O-fucosylated by POFUT2 on a serine or a threonine residue found within the consensus sequence C1-X(2)-(S/T)-C2-G of the TSP type-1 repeat domains where C1 and C2 are the first and second cysteine residue of the repeat, respectively. Fucosylated repeats can then be further glycosylated by the addition of a beta-1,3-glucose residue by the glucosyltransferase, B3GALTL. Fucosylation mediates the efficient secretion of ADAMTS family members. Can also be C-glycosylated with one or two mannose molecules on tryptophan residues within the consensus sequence W-X-X-W of the TPRs, and N-glycosylated. These other glycosylations can also facilitate secretion.

It is found in the secreted. It localises to the extracellular space. Its subcellular location is the extracellular matrix. It catalyses the reaction Glutamyl endopeptidase. Bonds cleaved include 370-Thr-Glu-Gly-Glu-|-Ala-Arg-Gly-Ser-377 in the interglobular domain of mammalian aggrecan.. In terms of biological role, cleaves aggrecan, a cartilage proteoglycan, at the '392-Glu-|-Ala-393' site and may be involved in its turnover. Also cleaves COMP. May play an important role in the destruction of aggrecan in arthritic diseases. In Pongo abelii (Sumatran orangutan), this protein is A disintegrin and metalloproteinase with thrombospondin motifs 4 (ADAMTS4).